The following is a 106-amino-acid chain: Small ribosomal subunit protein uS10 (106 aa).

Belongs to the universal ribosomal protein uS10 family. Part of the 30S ribosomal subunit.

Involved in the binding of tRNA to the ribosomes. The sequence is that of Small ribosomal subunit protein uS10 from Prochlorococcus marinus (strain MIT 9303).